The sequence spans 354 residues: 5,10-methenyltetrahydromethanopterin hydrogenase (354 aa).

The protein belongs to the HMD family.

It carries out the reaction 5,10-methenyl-5,6,7,8-tetrahydromethanopterin + H2 = 5,10-methylenetetrahydromethanopterin + H(+). The protein operates within one-carbon metabolism; methanogenesis from CO(2); 5,10-methylene-5,6,7,8-tetrahydromethanopterin from 5,10-methenyl-5,6,7,8-tetrahydromethanopterin (hydrogen route): step 1/1. Functionally, catalyzes the reversible reduction of methenyl-H(4)MPT(+) to methylene-H(4)MPT. The polypeptide is 5,10-methenyltetrahydromethanopterin hydrogenase (Methanococcus maripaludis (strain DSM 14266 / JCM 13030 / NBRC 101832 / S2 / LL)).